Consider the following 135-residue polypeptide: Holo-[acyl-carrier-protein] synthase (135 aa).

Asp-8 and Glu-57 together coordinate Mg(2+).

The protein belongs to the P-Pant transferase superfamily. AcpS family. The cofactor is Mg(2+).

The protein localises to the cytoplasm. The catalysed reaction is apo-[ACP] + CoA = holo-[ACP] + adenosine 3',5'-bisphosphate + H(+). Its function is as follows. Transfers the 4'-phosphopantetheine moiety from coenzyme A to a Ser of acyl-carrier-protein. This Methylobacterium sp. (strain 4-46) protein is Holo-[acyl-carrier-protein] synthase.